We begin with the raw amino-acid sequence, 1322 residues long: Phosphoribosylformylglycinamidine synthase (1322 aa).

300-311 (GASTGAGGEIRD) contacts ATP. Residues 593–608 (QQTPQRANHTETSPTP) show a composition bias toward polar residues. Residues 593-613 (QQTPQRANHTETSPTPNTLPP) form a disordered region. A702 contributes to the ATP binding site. Positions 703, 742, 746, and 915 each coordinate Mg(2+). Residue S917 coordinates ATP. The Glutamine amidotransferase type-1 domain maps to 1073–1322 (VAILREQGIN…LFRNARAWVG (250 aa)). Catalysis depends on C1166, which acts as the Nucleophile. Residues H1287 and E1289 contribute to the active site.

In the N-terminal section; belongs to the FGAMS family. Monomer.

Its subcellular location is the cytoplasm. The enzyme catalyses N(2)-formyl-N(1)-(5-phospho-beta-D-ribosyl)glycinamide + L-glutamine + ATP + H2O = 2-formamido-N(1)-(5-O-phospho-beta-D-ribosyl)acetamidine + L-glutamate + ADP + phosphate + H(+). Its pathway is purine metabolism; IMP biosynthesis via de novo pathway; 5-amino-1-(5-phospho-D-ribosyl)imidazole from N(2)-formyl-N(1)-(5-phospho-D-ribosyl)glycinamide: step 1/2. Phosphoribosylformylglycinamidine synthase involved in the purines biosynthetic pathway. Catalyzes the ATP-dependent conversion of formylglycinamide ribonucleotide (FGAR) and glutamine to yield formylglycinamidine ribonucleotide (FGAM) and glutamate. The polypeptide is Phosphoribosylformylglycinamidine synthase (Xylella fastidiosa (strain 9a5c)).